The sequence spans 433 residues: Staphylopine synthase (433 aa).

NADP(+)-binding positions include 9 to 12, R33, 37 to 40, and D99; these read TGPV and SEKS. H216 serves as the catalytic Proton donor/acceptor.

This sequence belongs to the staphylopine dehydrogenase family. Homodimer.

The catalysed reaction is staphylopine + NADP(+) + H2O = (2S)-2-amino-4-{[(1R)-1-carboxy-2-(1H-imidazol-4-yl)ethyl]amino}butanoate + pyruvate + NADPH + H(+). Functionally, catalyzes the NADPH-dependent reductive condensation of pyruvate to the intermediate formed by the adjacently encoded enzyme CntL, namely (2S)-2-amino-4-{[(1R)-1-carboxy-2-(1H-imidazol-4-yl)ethyl]amino}butanoate, leading to the production of staphylopine. This is the last step in the biosynthesis of the metallophore staphylopine, which is involved in the acquisition of nickel, cobalt, zinc, copper, and iron, and thus enables bacterial growth inside the host, where metal access is limited. Therefore, this enzyme probably contributes to staphylococcal virulence. Can use neither NADH nor alpha-ketoglutarate in place of NADPH and pyruvate, respectively. The sequence is that of Staphylopine synthase from Staphylococcus aureus (strain Mu50 / ATCC 700699).